We begin with the raw amino-acid sequence, 314 residues long: NADH-ubiquinone oxidoreductase chain 1 (314 aa).

8 helical membrane-spanning segments follow: residues I5–L25, F78–I98, L105–G125, A152–F172, Y176–A196, L227–F247, D251–V271, and L294–F314.

It belongs to the complex I subunit 1 family.

The protein resides in the mitochondrion inner membrane. It carries out the reaction a ubiquinone + NADH + 5 H(+)(in) = a ubiquinol + NAD(+) + 4 H(+)(out). In terms of biological role, core subunit of the mitochondrial membrane respiratory chain NADH dehydrogenase (Complex I) that is believed to belong to the minimal assembly required for catalysis. Complex I functions in the transfer of electrons from NADH to the respiratory chain. The immediate electron acceptor for the enzyme is believed to be ubiquinone. This chain is NADH-ubiquinone oxidoreductase chain 1 (mt:ND1), found in Anopheles gambiae (African malaria mosquito).